Reading from the N-terminus, the 542-residue chain is Nif-specific regulatory protein (542 aa).

The region spanning 29–170 (DLSKTLREVL…MVANLIGQTV (142 aa)) is the GAF domain. In terms of domain architecture, Sigma-54 factor interaction spans 203–432 (VIGISKAMQE…LENCVERTAT (230 aa)). Residues 231 to 238 (GESGTGKE) and 294 to 303 (AHGGTLFLDE) contribute to the ATP site. The segment at 433–499 (MMRGDLITEV…ATGAAPPTSE (67 aa)) is inter-domain linker. Residues C446 and C451 each coordinate a divalent metal cation. The interval 500–542 (RERLIWAMEQCGWVQAKAARALNISPRQMGYALQKFNIEVKKF) is C-terminal DNA-binding domain. Residues 514-533 (QAKAARALNISPRQMGYALQ) constitute a DNA-binding region (H-T-H motif).

In terms of assembly, interacts with sigma-54.

Its function is as follows. Required for activation of most nif operons, which are directly involved in nitrogen fixation. The sequence is that of Nif-specific regulatory protein (nifA) from Herbaspirillum seropedicae.